A 211-amino-acid polypeptide reads, in one-letter code: Nucleoside triphosphate pyrophosphatase (211 aa).

The active-site Proton acceptor is aspartate 75.

This sequence belongs to the Maf family. A divalent metal cation serves as cofactor.

The protein resides in the cytoplasm. It carries out the reaction a ribonucleoside 5'-triphosphate + H2O = a ribonucleoside 5'-phosphate + diphosphate + H(+). The enzyme catalyses a 2'-deoxyribonucleoside 5'-triphosphate + H2O = a 2'-deoxyribonucleoside 5'-phosphate + diphosphate + H(+). Its function is as follows. Nucleoside triphosphate pyrophosphatase. May have a dual role in cell division arrest and in preventing the incorporation of modified nucleotides into cellular nucleic acids. This Prochlorococcus marinus (strain NATL2A) protein is Nucleoside triphosphate pyrophosphatase.